The primary structure comprises 475 residues: Chemotaxis protein MotD (475 aa).

Disordered regions lie at residues 1-175 (MRPL…PVGG), 195-243 (LQPE…SEPD), and 408-475 (GDSA…HVYM). The segment covering 9–22 (RTSAASRPAQSLSV) has biased composition (polar residues). The segment covering 79–100 (ADVPASMADAASPDARPASERA) has biased composition (low complexity). The segment covering 143 to 155 (HSRETVHALRDAI) has biased composition (basic and acidic residues). A compositionally biased stretch (gly residues) spans 408 to 417 (GDSASGGGGQ). A compositionally biased stretch (basic and acidic residues) spans 427–449 (EGRERAGDDGQGRQPRDGGRAAT).

The protein localises to the cytoplasm. Required for the rotation of the flagellar motor. Has a positive effect as flagellar rotation increases when an excess of motd is present. This is Chemotaxis protein MotD (motD) from Rhizobium meliloti (Ensifer meliloti).